The chain runs to 222 residues: ALADPLKVMISGAPASGKGTQCELIKTKYQLAHISAGDLLRAEIAAGSENGKRAKEFMEKGQLVPDEIVVNMVKERLRQPDAQENGWLLDGYPRSYSQAMALETLEIRPDTFILLDVPDELLVERVVGRRLDPVTGKIYHLKYSPPENEEIASRLTQRFDDTEEKVKLRLETYYQNIESLLSTYENIIVKVQGDATVDAVFAKIDELLGSILEKKNEMVSST.

15 to 20 (ASGKGT) lines the ATP pocket. Positions 35-64 (SAGDLLRAEIAAGSENGKRAKEFMEKGQLV) are NMP. AMP-binding positions include arginine 41, 62–64 (QLV), 91–94 (GYPR), and glutamine 98. The tract at residues 128–161 (GRRLDPVTGKIYHLKYSPPENEEIASRLTQRFDD) is LID. Arginine 129 contributes to the ATP binding site. Arginine 158 serves as a coordination point for AMP. Alanine 195 contacts ATP.

In terms of assembly, monomer.

The protein localises to the plastid. It is found in the chloroplast. The catalysed reaction is AMP + ATP = 2 ADP. Catalyzes the reversible transfer of the terminal phosphate group between ATP and AMP. Plays an important role in cellular energy homeostasis and in adenine nucleotide metabolism. The maize enzyme also works with CMP, albeit with 10% of the activity with AMP. The protein is Adenylate kinase, chloroplastic (ADK1) of Zea mays (Maize).